A 297-amino-acid polypeptide reads, in one-letter code: Virulence genes transcriptional activator (297 aa).

The 61-residue stretch at 1–61 (MDFLINKKLK…IRKNGTLIPT (61 aa)) folds into the HTH lysR-type domain. The H-T-H motif DNA-binding region spans 21 to 40 (FSIATSVLYITRTPLSRVIS).

Belongs to the LysR transcriptional regulatory family.

It is found in the cytoplasm. Functionally, positive regulator for the plasmid-encoded virulence factors SpvA, SpvB, and SpvC. This chain is Virulence genes transcriptional activator (mkaC), found in Salmonella typhimurium (strain LT2 / SGSC1412 / ATCC 700720).